The chain runs to 567 residues: Proline--tRNA ligase (567 aa).

This sequence belongs to the class-II aminoacyl-tRNA synthetase family. ProS type 1 subfamily. In terms of assembly, homodimer.

The protein localises to the cytoplasm. It catalyses the reaction tRNA(Pro) + L-proline + ATP = L-prolyl-tRNA(Pro) + AMP + diphosphate. Catalyzes the attachment of proline to tRNA(Pro) in a two-step reaction: proline is first activated by ATP to form Pro-AMP and then transferred to the acceptor end of tRNA(Pro). As ProRS can inadvertently accommodate and process non-cognate amino acids such as alanine and cysteine, to avoid such errors it has two additional distinct editing activities against alanine. One activity is designated as 'pretransfer' editing and involves the tRNA(Pro)-independent hydrolysis of activated Ala-AMP. The other activity is designated 'posttransfer' editing and involves deacylation of mischarged Ala-tRNA(Pro). The misacylated Cys-tRNA(Pro) is not edited by ProRS. This Stenotrophomonas maltophilia (strain R551-3) protein is Proline--tRNA ligase.